The chain runs to 101 residues: Small ribosomal subunit protein uS14 (101 aa).

Residues 48–69 form a disordered region; it reads LSKLPRDSSPSRHRSRCELSGR. Residues 51-68 are compositionally biased toward basic and acidic residues; the sequence is LPRDSSPSRHRSRCELSG.

It belongs to the universal ribosomal protein uS14 family. As to quaternary structure, part of the 30S ribosomal subunit. Contacts proteins S3 and S10.

In terms of biological role, binds 16S rRNA, required for the assembly of 30S particles and may also be responsible for determining the conformation of the 16S rRNA at the A site. The polypeptide is Small ribosomal subunit protein uS14 (Stenotrophomonas maltophilia (strain R551-3)).